Here is a 90-residue protein sequence, read N- to C-terminus: UPF0298 protein RBAM_014860 (90 aa).

It belongs to the UPF0298 family.

Its subcellular location is the cytoplasm. The protein is UPF0298 protein RBAM_014860 of Bacillus velezensis (strain DSM 23117 / BGSC 10A6 / LMG 26770 / FZB42) (Bacillus amyloliquefaciens subsp. plantarum).